Consider the following 250-residue polypeptide: UDP-2,3-diacylglucosamine hydrolase (250 aa).

5 residues coordinate Mn(2+): aspartate 7, histidine 9, aspartate 40, asparagine 78, and histidine 113. A substrate-binding site is contributed by asparagine 78 to arginine 79. Residues aspartate 121, serine 159, threonine 163, lysine 166, and histidine 194 each contribute to the substrate site. Mn(2+)-binding residues include histidine 194 and histidine 196.

Belongs to the LpxH family. Mn(2+) serves as cofactor.

It is found in the cell inner membrane. The enzyme catalyses UDP-2-N,3-O-bis[(3R)-3-hydroxytetradecanoyl]-alpha-D-glucosamine + H2O = 2-N,3-O-bis[(3R)-3-hydroxytetradecanoyl]-alpha-D-glucosaminyl 1-phosphate + UMP + 2 H(+). Its pathway is glycolipid biosynthesis; lipid IV(A) biosynthesis; lipid IV(A) from (3R)-3-hydroxytetradecanoyl-[acyl-carrier-protein] and UDP-N-acetyl-alpha-D-glucosamine: step 4/6. Its function is as follows. Hydrolyzes the pyrophosphate bond of UDP-2,3-diacylglucosamine to yield 2,3-diacylglucosamine 1-phosphate (lipid X) and UMP by catalyzing the attack of water at the alpha-P atom. Involved in the biosynthesis of lipid A, a phosphorylated glycolipid that anchors the lipopolysaccharide to the outer membrane of the cell. The sequence is that of UDP-2,3-diacylglucosamine hydrolase from Pseudomonas fluorescens (strain ATCC BAA-477 / NRRL B-23932 / Pf-5).